A 104-amino-acid polypeptide reads, in one-letter code: SOSS complex subunit C (104 aa).

Alanine 2 carries the post-translational modification N-acetylalanine.

The protein belongs to the SOSS-C family. As to quaternary structure, component of the SOSS complex, composed of SOSS-B (SOSS-B1/NABP2 or SOSS-B2/NABP1), SOSS-A/INTS3 and SOSS-C/INIP. SOSS complexes containing SOSS-B1/NABP2 are more abundant than complexes containing SOSS-B2/NABP1. Interacts with INTS3; the interaction is direct.

The protein resides in the nucleus. Functionally, component of the SOSS complex, a multiprotein complex that functions downstream of the MRN complex to promote DNA repair and G2/M checkpoint. The SOSS complex associates with single-stranded DNA at DNA lesions and influences diverse endpoints in the cellular DNA damage response including cell-cycle checkpoint activation, recombinational repair and maintenance of genomic stability. Required for efficient homologous recombination-dependent repair of double-strand breaks (DSBs) and ATM-dependent signaling pathways. The protein is SOSS complex subunit C (INIP) of Bos taurus (Bovine).